Consider the following 473-residue polypeptide: Photosystem II CP43 reaction center protein (473 aa).

A propeptide spanning residues 1-14 (MKTLYSLRRFYHVE) is cleaved from the precursor. An N-acetylthreonine modification is found at Thr-15. Thr-15 carries the phosphothreonine modification. Transmembrane regions (helical) follow at residues 69–93 (LFEV…PHLA), 134–155 (LLGP…KDRN), 178–200 (KASY…RKIT), 255–275 (KPFA…LSYS), and 291–312 (WFNN…ASQA). Glu-367 is a [CaMn4O5] cluster binding site. The helical transmembrane segment at 447 to 471 (RARAAAAGFEKGIDRDFEPVLSMTP) threads the bilayer.

Belongs to the PsbB/PsbC family. PsbC subfamily. As to quaternary structure, PSII is composed of 1 copy each of membrane proteins PsbA, PsbB, PsbC, PsbD, PsbE, PsbF, PsbH, PsbI, PsbJ, PsbK, PsbL, PsbM, PsbT, PsbX, PsbY, PsbZ, Psb30/Ycf12, at least 3 peripheral proteins of the oxygen-evolving complex and a large number of cofactors. It forms dimeric complexes. The cofactor is Binds multiple chlorophylls and provides some of the ligands for the Ca-4Mn-5O cluster of the oxygen-evolving complex. It may also provide a ligand for a Cl- that is required for oxygen evolution. PSII binds additional chlorophylls, carotenoids and specific lipids..

It is found in the plastid. It localises to the chloroplast thylakoid membrane. One of the components of the core complex of photosystem II (PSII). It binds chlorophyll and helps catalyze the primary light-induced photochemical processes of PSII. PSII is a light-driven water:plastoquinone oxidoreductase, using light energy to abstract electrons from H(2)O, generating O(2) and a proton gradient subsequently used for ATP formation. This is Photosystem II CP43 reaction center protein from Cicer arietinum (Chickpea).